We begin with the raw amino-acid sequence, 116 residues long: Large ribosomal subunit protein bL20 (116 aa).

Belongs to the bacterial ribosomal protein bL20 family.

In terms of biological role, binds directly to 23S ribosomal RNA and is necessary for the in vitro assembly process of the 50S ribosomal subunit. It is not involved in the protein synthesizing functions of that subunit. This is Large ribosomal subunit protein bL20 from Nitratiruptor sp. (strain SB155-2).